The following is a 403-amino-acid chain: 3-hydroxy-3-methylglutaryl-coenzyme A reductase (403 aa).

Catalysis depends on charge relay system residues glutamate 99 and aspartate 303. Histidine 398 acts as the Proton donor in catalysis.

This sequence belongs to the HMG-CoA reductase family.

It catalyses the reaction (R)-mevalonate + 2 NADP(+) + CoA = (3S)-3-hydroxy-3-methylglutaryl-CoA + 2 NADPH + 2 H(+). The protein operates within metabolic intermediate biosynthesis; (R)-mevalonate biosynthesis; (R)-mevalonate from acetyl-CoA: step 3/3. With respect to regulation, is competitively inhibited by (R)-HMG-CoA and lovastatin (formerly called mevinolin). Functionally, catalyzes the NADPH-dependent reductive deacylation of (S)-3-hydroxy-3-methylglutaryl-CoA (HMG-CoA) to (R)-mevalonate. Functions in the mevalonate (MVA) pathway leading to isopentenyl diphosphate (IPP), a key precursor for the biosynthesis of isoprenoid compounds such as archaeal membrane lipids. Is also able to catalyze the reduction of mevaldehyde to mevalonate and the oxidative acylation of mevaldehyde to HMG-CoA. In Haloferax volcanii (strain ATCC 29605 / DSM 3757 / JCM 8879 / NBRC 14742 / NCIMB 2012 / VKM B-1768 / DS2) (Halobacterium volcanii), this protein is 3-hydroxy-3-methylglutaryl-coenzyme A reductase (hmgA).